Consider the following 146-residue polypeptide: UPF0178 protein BCAH187_A3092 (146 aa).

The protein belongs to the UPF0178 family.

This chain is UPF0178 protein BCAH187_A3092, found in Bacillus cereus (strain AH187).